The primary structure comprises 146 residues: Hemoglobin subunit beta (146 aa).

N-acetylvaline is present on V1. Residues 2–146 form the Globin domain; that stretch reads HLSGEEKTAL…VANALAHKYH (145 aa). The residue at position 44 (S44) is a Phosphoserine. An N6-acetyllysine modification is found at K59. H63 is a binding site for heme b. K82 is subject to N6-acetyllysine. H92 is a heme b binding site. Position 93 is an S-nitrosocysteine (C93). The residue at position 144 (K144) is an N6-acetyllysine.

The protein belongs to the globin family. In terms of assembly, heterotetramer of two alpha chains and two beta chains. In terms of tissue distribution, red blood cells.

Its function is as follows. Involved in oxygen transport from the lung to the various peripheral tissues. The sequence is that of Hemoglobin subunit beta from Tamiasciurus hudsonicus (American red squirrel).